The sequence spans 381 residues: Pentraxin-related protein PTX3 (381 aa).

An N-terminal signal peptide occupies residues Met1–Ala17. 2 cysteine pairs are disulfide-bonded: Cys179-Cys357 and Cys210-Cys271. A Pentraxin (PTX) domain is found at Cys179–Ser381. Asn220 is a glycosylation site (N-linked (GlcNAc...) asparagine).

In terms of assembly, homooctamer; disulfide-linked. Binds to C1q.

The protein resides in the secreted. Plays a role in the regulation of innate resistance to pathogens, inflammatory reactions, possibly clearance of self-components and female fertility. The protein is Pentraxin-related protein PTX3 (Ptx3) of Mus musculus (Mouse).